Here is a 466-residue protein sequence, read N- to C-terminus: UDP-N-acetylmuramoylalanine--D-glutamate ligase (466 aa).

Residue 124–130 (GSDGKTT) participates in ATP binding.

It belongs to the MurCDEF family.

It is found in the cytoplasm. It carries out the reaction UDP-N-acetyl-alpha-D-muramoyl-L-alanine + D-glutamate + ATP = UDP-N-acetyl-alpha-D-muramoyl-L-alanyl-D-glutamate + ADP + phosphate + H(+). Its pathway is cell wall biogenesis; peptidoglycan biosynthesis. Its function is as follows. Cell wall formation. Catalyzes the addition of glutamate to the nucleotide precursor UDP-N-acetylmuramoyl-L-alanine (UMA). This is UDP-N-acetylmuramoylalanine--D-glutamate ligase from Acetivibrio thermocellus (strain ATCC 27405 / DSM 1237 / JCM 9322 / NBRC 103400 / NCIMB 10682 / NRRL B-4536 / VPI 7372) (Clostridium thermocellum).